The chain runs to 363 residues: Holliday junction branch migration complex subunit RuvB (363 aa).

Residues 1-32 (MSDVERTEFEIPGGIPPRRNGGQGRAADTNVD) are disordered. Residues 27–207 (ADTNVDANLK…FGFTAQMEFY (181 aa)) form a large ATPase domain (RuvB-L) region. ATP contacts are provided by residues L46, R47, G88, K91, T92, T93, 154 to 156 (EDF), R197, Y207, and R244. Mg(2+) is bound at residue T92. Positions 208–278 (DVPDLTKVVK…AANAALIVFD (71 aa)) are small ATPAse domain (RuvB-S). The head domain (RuvB-H) stretch occupies residues 281 to 363 (EVGLDRLDRA…EPPEGTIGDY (83 aa)). R336 and R341 together coordinate DNA.

The protein belongs to the RuvB family. Homohexamer. Forms an RuvA(8)-RuvB(12)-Holliday junction (HJ) complex. HJ DNA is sandwiched between 2 RuvA tetramers; dsDNA enters through RuvA and exits via RuvB. An RuvB hexamer assembles on each DNA strand where it exits the tetramer. Each RuvB hexamer is contacted by two RuvA subunits (via domain III) on 2 adjacent RuvB subunits; this complex drives branch migration. In the full resolvosome a probable DNA-RuvA(4)-RuvB(12)-RuvC(2) complex forms which resolves the HJ.

It localises to the cytoplasm. The enzyme catalyses ATP + H2O = ADP + phosphate + H(+). In terms of biological role, the RuvA-RuvB-RuvC complex processes Holliday junction (HJ) DNA during genetic recombination and DNA repair, while the RuvA-RuvB complex plays an important role in the rescue of blocked DNA replication forks via replication fork reversal (RFR). RuvA specifically binds to HJ cruciform DNA, conferring on it an open structure. The RuvB hexamer acts as an ATP-dependent pump, pulling dsDNA into and through the RuvAB complex. RuvB forms 2 homohexamers on either side of HJ DNA bound by 1 or 2 RuvA tetramers; 4 subunits per hexamer contact DNA at a time. Coordinated motions by a converter formed by DNA-disengaged RuvB subunits stimulates ATP hydrolysis and nucleotide exchange. Immobilization of the converter enables RuvB to convert the ATP-contained energy into a lever motion, pulling 2 nucleotides of DNA out of the RuvA tetramer per ATP hydrolyzed, thus driving DNA branch migration. The RuvB motors rotate together with the DNA substrate, which together with the progressing nucleotide cycle form the mechanistic basis for DNA recombination by continuous HJ branch migration. Branch migration allows RuvC to scan DNA until it finds its consensus sequence, where it cleaves and resolves cruciform DNA. The chain is Holliday junction branch migration complex subunit RuvB from Corynebacterium glutamicum (strain R).